We begin with the raw amino-acid sequence, 307 residues long: Ribosomal RNA small subunit methyltransferase H (307 aa).

Residues 34–36 (GGH), aspartate 54, phenylalanine 79, aspartate 101, and glutamine 108 contribute to the S-adenosyl-L-methionine site.

This sequence belongs to the methyltransferase superfamily. RsmH family.

It localises to the cytoplasm. The catalysed reaction is cytidine(1402) in 16S rRNA + S-adenosyl-L-methionine = N(4)-methylcytidine(1402) in 16S rRNA + S-adenosyl-L-homocysteine + H(+). Specifically methylates the N4 position of cytidine in position 1402 (C1402) of 16S rRNA. The chain is Ribosomal RNA small subunit methyltransferase H from Ruthia magnifica subsp. Calyptogena magnifica.